The primary structure comprises 127 residues: Large ribosomal subunit protein bL12 (127 aa).

The protein belongs to the bacterial ribosomal protein bL12 family. In terms of assembly, homodimer. Part of the ribosomal stalk of the 50S ribosomal subunit. Forms a multimeric L10(L12)X complex, where L10 forms an elongated spine to which 2 to 4 L12 dimers bind in a sequential fashion. Binds GTP-bound translation factors.

Functionally, forms part of the ribosomal stalk which helps the ribosome interact with GTP-bound translation factors. Is thus essential for accurate translation. In Streptococcus thermophilus (strain CNRZ 1066), this protein is Large ribosomal subunit protein bL12.